Here is a 241-residue protein sequence, read N- to C-terminus: U2 small nuclear ribonucleoprotein B'' (241 aa).

The region spanning Gln-12–Ser-91 is the RRM 1 domain. Over residues Leu-99–Ser-126 the composition is skewed to basic and acidic residues. The interval Leu-99 to Leu-169 is disordered. The span at Gln-129 to Ser-152 shows a compositional bias: low complexity. Residues Lys-167–Gln-241 enclose the RRM 2 domain.

It belongs to the RRM U1 A/B'' family. In terms of assembly, identified in the spliceosome B complex. Identified in the spliceosome C complex.

Its subcellular location is the nucleus. Functionally, involved in pre-mRNA splicing as component of the spliceosome. Associated with sn-RNP U2, where it contributes to the binding of stem loop IV of U2 snRNA. The sequence is that of U2 small nuclear ribonucleoprotein B'' (snrpb2) from Dictyostelium discoideum (Social amoeba).